Here is a 309-residue protein sequence, read N- to C-terminus: 5-formyl-3-hydroxy-2-methylpyridine 4-carboxylate 5-dehydrogenase (309 aa).

Residues 12 to 13 (TM), Asp-32, 87 to 89 (VPE), and Lys-94 contribute to the NAD(+) site.

The protein belongs to the 3-hydroxyacyl-CoA dehydrogenase family. As to quaternary structure, homodimer.

It carries out the reaction 5-formyl-3-hydroxy-2-methylpyridine-4-carboxylate + NAD(+) + H2O = 5-hydroxy-6-methylpyridine-3,4-dicarboxylate + NADH + 2 H(+). The enzyme catalyses 5-formyl-3-hydroxy-2-methylpyridine-4-carboxylate + NADH + H(+) = 4-pyridoxate + NAD(+). Its pathway is cofactor degradation; B6 vitamer degradation. Involved in the degradation of pyridoxine (vitamin B(6)). Catalyzes the oxidation of 5-formyl-3-hydroxy-2-methylpyridine-4-carboxylate (FHMPC) by NAD(+) to 5-hydroxy-6-methylpyridine-3,4-dicarboxylate (HMPDC). Can also catalyze the reduction of FHMPC by NADH to 4-pyridoxic acid. The polypeptide is 5-formyl-3-hydroxy-2-methylpyridine 4-carboxylate 5-dehydrogenase (Mesorhizobium japonicum (strain LMG 29417 / CECT 9101 / MAFF 303099) (Mesorhizobium loti (strain MAFF 303099))).